The chain runs to 473 residues: Photosystem II CP43 reaction center protein (473 aa).

Positions 1 to 14 (MKTLYSLRRSYPVE) are excised as a propeptide. Thr-15 is modified (N-acetylthreonine). Thr-15 is modified (phosphothreonine). The next 5 helical transmembrane spans lie at 69–93 (LFEV…PHLA), 134–155 (LIGP…KDRN), 178–200 (KALY…RKIT), 255–275 (KPFA…LSYS), and 291–312 (WFNN…ASQA). Residue Glu-367 participates in [CaMn4O5] cluster binding. Residues 447 to 471 (RARAAAAGFEKGIDRDFEPVLSMTP) form a helical membrane-spanning segment.

This sequence belongs to the PsbB/PsbC family. PsbC subfamily. In terms of assembly, PSII is composed of 1 copy each of membrane proteins PsbA, PsbB, PsbC, PsbD, PsbE, PsbF, PsbH, PsbI, PsbJ, PsbK, PsbL, PsbM, PsbT, PsbX, PsbY, PsbZ, Psb30/Ycf12, at least 3 peripheral proteins of the oxygen-evolving complex and a large number of cofactors. It forms dimeric complexes. Requires Binds multiple chlorophylls and provides some of the ligands for the Ca-4Mn-5O cluster of the oxygen-evolving complex. It may also provide a ligand for a Cl- that is required for oxygen evolution. PSII binds additional chlorophylls, carotenoids and specific lipids. as cofactor.

Its subcellular location is the plastid. The protein localises to the chloroplast thylakoid membrane. Functionally, one of the components of the core complex of photosystem II (PSII). It binds chlorophyll and helps catalyze the primary light-induced photochemical processes of PSII. PSII is a light-driven water:plastoquinone oxidoreductase, using light energy to abstract electrons from H(2)O, generating O(2) and a proton gradient subsequently used for ATP formation. This is Photosystem II CP43 reaction center protein from Abies alba (Edeltanne).